Here is a 493-residue protein sequence, read N- to C-terminus: Acetylcholine receptor subunit beta (493 aa).

Positions 1-24 are cleaved as a signal peptide; the sequence is MENVRRMALGLVVMMALALSGVGA. Residues 25-240 lie on the Extracellular side of the membrane; the sequence is SVMEDTLLSV…VTFYLIIQRK (216 aa). A disulfide bond links Cys-152 and Cys-166. The N-linked (GlcNAc...) asparagine glycan is linked to Asn-165. Helical transmembrane passes span 241–265, 273–291, and 307–328; these read PLFYIVYTIIPCILISILAILVFYL, MSLSISALLAVTVFLLLLA, and YLMFIMILVAFSVILSVVVLNL. Residues 329-461 lie on the Cytoplasmic side of the membrane; that stretch reads HHRSPNTHTM…WQYVAMVADR (133 aa). Tyr-379 is subject to Phosphotyrosine; by Tyr-kinases. The chain crosses the membrane as a helical span at residues 462–480; sequence LFLYVFFVICSIGTFSIFL.

It belongs to the ligand-gated ion channel (TC 1.A.9) family. Acetylcholine receptor (TC 1.A.9.1) subfamily. Beta-1/CHRNB1 sub-subfamily. In terms of assembly, pentamer of two alpha chains, and one each of the beta, delta, and gamma chains.

Its subcellular location is the postsynaptic cell membrane. It localises to the cell membrane. The catalysed reaction is K(+)(in) = K(+)(out). It catalyses the reaction Na(+)(in) = Na(+)(out). Its function is as follows. After binding acetylcholine, the AChR responds by an extensive change in conformation that affects all subunits and leads to opening of an ion-conducting channel across the plasma membrane. This chain is Acetylcholine receptor subunit beta (CHRNB1), found in Tetronarce californica (Pacific electric ray).